Here is a 313-residue protein sequence, read N- to C-terminus: L-lactate dehydrogenase 1 (313 aa).

NAD(+)-binding residues include valine 15, aspartate 36, arginine 41, and tyrosine 66. Substrate-binding positions include glutamine 83, arginine 89, and 121–124; that span reads NPVD. NAD(+)-binding positions include 119-121 and serine 144; that span reads ASN. Residue 149–152 coordinates substrate; sequence DTAR. Beta-D-fructose 1,6-bisphosphate-binding residues include arginine 154 and histidine 169. Histidine 176 serves as the catalytic Proton acceptor. Tyrosine 218 bears the Phosphotyrosine mark. Threonine 227 contacts substrate.

This sequence belongs to the LDH/MDH superfamily. LDH family. Homotetramer.

It is found in the cytoplasm. It carries out the reaction (S)-lactate + NAD(+) = pyruvate + NADH + H(+). Its pathway is fermentation; pyruvate fermentation to lactate; (S)-lactate from pyruvate: step 1/1. With respect to regulation, allosterically activated by fructose 1,6-bisphosphate (FBP). In terms of biological role, catalyzes the conversion of lactate to pyruvate. The polypeptide is L-lactate dehydrogenase 1 (Listeria innocua serovar 6a (strain ATCC BAA-680 / CLIP 11262)).